We begin with the raw amino-acid sequence, 85 residues long: Cloacin immunity protein (85 aa).

An N6-methyllysine modification is found at Lys12.

The protein belongs to the cloacin immunity protein family.

Its function is as follows. This protein complexes with cloacin protein in equimolar amounts and inhibits it by binding with high affinity to the C-terminal catalytic domain of cloacin. The chain is Cloacin immunity protein (cim) from Escherichia coli.